We begin with the raw amino-acid sequence, 610 residues long: Protein SAN1 (610 aa).

A compositionally biased stretch (polar residues) spans 1-10 (MSESGQEQNR). Disordered regions lie at residues 1 to 36 (MSES…NGGA) and 176 to 231 (VDST…PSIP). Residues 11 to 36 (GTNTSPNNAENNNNSNAASGPLNGGA) are compositionally biased toward low complexity. Over residues 194-203 (EGTKKRKDNE) the composition is skewed to basic and acidic residues. The segment covering 210-223 (TADNDSNPSITNAT) has biased composition (polar residues). The RING-type zinc finger occupies 240–280 (NDEETNPSYKHSPIKLPCGHIFGRECIYKWSRLENSCPLCR). Disordered regions lie at residues 318–348 (TAVN…ASSG), 360–453 (VPQN…TDPH), 471–502 (GTSD…TTQG), 514–554 (GHFT…GVAS), and 569–610 (NNNS…RSSQ). Residues 319–348 (AVNSTNENSSAPSENTSNTTVPTIGNASSG) show a composition bias toward polar residues. Composition is skewed to low complexity over residues 384–406 (NGPS…NQSP) and 425–447 (PSAS…NTSS). Positions 471–492 (GTSDTSATTAPGAQTVHNQGRN) are enriched in polar residues. A compositionally biased stretch (low complexity) spans 493 to 502 (DSSSSDTTQG). 2 stretches are compositionally biased toward polar residues: residues 533 to 554 (QQRG…GVAS) and 592 to 610 (DTTI…RSSQ).

Functionally, plays a specific role in mating-type regulation of yeast, by acting post-translationally to control the stability or activity of the SIR4 proteins. This is Protein SAN1 (SAN1) from Saccharomyces cerevisiae (strain ATCC 204508 / S288c) (Baker's yeast).